The chain runs to 310 residues: ADP-L-glycero-D-manno-heptose-6-epimerase (310 aa).

Residues 10–11, 31–32, K38, K53, 75–79, and N92 contribute to the NADP(+) site; these read FI, DN, and EGACS. The active-site Proton acceptor is Y140. K144 provides a ligand contact to NADP(+). Substrate is bound at residue N169. Residues V170 and K178 each contribute to the NADP(+) site. The active-site Proton acceptor is K178. Residues S180, H187, 201–204, R209, and Y272 contribute to the substrate site; that span reads FEGS.

This sequence belongs to the NAD(P)-dependent epimerase/dehydratase family. HldD subfamily. Homopentamer. NADP(+) serves as cofactor.

It carries out the reaction ADP-D-glycero-beta-D-manno-heptose = ADP-L-glycero-beta-D-manno-heptose. It participates in nucleotide-sugar biosynthesis; ADP-L-glycero-beta-D-manno-heptose biosynthesis; ADP-L-glycero-beta-D-manno-heptose from D-glycero-beta-D-manno-heptose 7-phosphate: step 4/4. In terms of biological role, catalyzes the interconversion between ADP-D-glycero-beta-D-manno-heptose and ADP-L-glycero-beta-D-manno-heptose via an epimerization at carbon 6 of the heptose. The sequence is that of ADP-L-glycero-D-manno-heptose-6-epimerase from Klebsiella pneumoniae subsp. pneumoniae (strain ATCC 700721 / MGH 78578).